Here is a 433-residue protein sequence, read N- to C-terminus: Serine carboxypeptidase-like 11 (433 aa).

A signal peptide spans 1–21; that stretch reads MELTLKLLVLLLFILNHHVGS. Disulfide bonds link Cys80/Cys322, Cys243/Cys257, and Cys281/Cys288. Asn101 carries an N-linked (GlcNAc...) asparagine glycan. Ser176 is a catalytic residue. Asn342 is a glycosylation site (N-linked (GlcNAc...) asparagine). The active site involves Asp358. Asn374 is a glycosylation site (N-linked (GlcNAc...) asparagine). The active site involves His411.

The protein belongs to the peptidase S10 family. In terms of tissue distribution, ubiquitous.

The protein resides in the secreted. In terms of biological role, probable carboxypeptidase. The protein is Serine carboxypeptidase-like 11 (SCPL11) of Arabidopsis thaliana (Mouse-ear cress).